We begin with the raw amino-acid sequence, 127 residues long: Large ribosomal subunit protein bL21 (127 aa).

It belongs to the bacterial ribosomal protein bL21 family. In terms of assembly, part of the 50S ribosomal subunit. Contacts protein L20.

In terms of biological role, this protein binds to 23S rRNA in the presence of protein L20. This Blochmanniella floridana protein is Large ribosomal subunit protein bL21.